The chain runs to 185 residues: MIQDVKNTAEQKMQKSIEALKADLSKVRTGRAHTGLLDHVQVEYYGSMVAINQVASVSLGDARTLNVQAYEKNMTPKVEKAIRDADLGLNPATNGDIIRVPMPMLTEERRRDLVKVVRSEAENAKVAIRNVRRDANDALKKLVKDKEISEDDERRAQDEVQKLTDKFVAEIDKLLQTKEAELMAV.

Belongs to the RRF family.

The protein localises to the cytoplasm. Responsible for the release of ribosomes from messenger RNA at the termination of protein biosynthesis. May increase the efficiency of translation by recycling ribosomes from one round of translation to another. In Methylobacillus flagellatus (strain ATCC 51484 / DSM 6875 / VKM B-1610 / KT), this protein is Ribosome-recycling factor.